A 314-amino-acid chain; its full sequence is Porphobilinogen deaminase (314 aa).

At C242 the chain carries S-(dipyrrolylmethanemethyl)cysteine.

Belongs to the HMBS family. As to quaternary structure, monomer. Dipyrromethane is required as a cofactor.

It carries out the reaction 4 porphobilinogen + H2O = hydroxymethylbilane + 4 NH4(+). The protein operates within porphyrin-containing compound metabolism; protoporphyrin-IX biosynthesis; coproporphyrinogen-III from 5-aminolevulinate: step 2/4. Tetrapolymerization of the monopyrrole PBG into the hydroxymethylbilane pre-uroporphyrinogen in several discrete steps. The chain is Porphobilinogen deaminase (hemC) from Buchnera aphidicola subsp. Acyrthosiphon pisum (strain APS) (Acyrthosiphon pisum symbiotic bacterium).